The primary structure comprises 100 residues: Small ribosomal subunit protein uS14c (100 aa).

Belongs to the universal ribosomal protein uS14 family. In terms of assembly, part of the 30S ribosomal subunit.

It is found in the plastid. The protein resides in the chloroplast. In terms of biological role, binds 16S rRNA, required for the assembly of 30S particles. The polypeptide is Small ribosomal subunit protein uS14c (Glycine max (Soybean)).